The chain runs to 552 residues: MATEGLLSAETDQDVARFLANFPPTEWGYSFASLLPQDSEFESHTKELDLVKEKVKDMLMQSRKELTENIEFVNCLCRLGVSYHFESEIIEQLSHIFISLPKILEENDYSLYILTLLFRVLRQHGYKMPCDVFNKFKDSNGEFKKCMTADVRGLLSLYEATFLSVHGEDILDEALAFTRQHLETLAEKSSPHLARHIRNALHLPFHHAPERLEILQYICFYEGEKSMNETLLKFAKLDFNRLQLLYRKELGLLSRWWKDINLTEKLPYTRDRIVEAYAWAAGIIIDPQFSRARLQFAKHLILISVMDDTYDSYGTFDELKHFTAALQRFTFEPTIELPEYMKFLYNILWNFFQETEKDETQGCACKTSFAREMLKELARSYFAEAEWYNDGVLPTFDEFMQFGLVSSTFDYHASAFFLGVEDLGMKEFIWLRDNPTIAKTAKLFGRLFNDIAIREDEQKKGDYPSAIKCYMNDHDVSLEKAKEDILKMLEDGWKDMNEELMKPTTVPKILTKFSINFVRMSDFTYRGGIDKYTCGTELKEFVKKLTIFPLQI.

Residues Asp-307, Asp-311, and Glu-457 each contribute to the Mg(2+) site. Residues 307–311 carry the DDXXD motif motif; the sequence is DDTYD.

The protein belongs to the terpene synthase family. Mg(2+) is required as a cofactor.

Catalyzes the cyclization of farnesyl diphosphate to multiple sesquiterpenes, such as olefins and sesquiterpene alcohols. This chain is Terpene synthase 5 (TPS5), found in Ricinus communis (Castor bean).